A 256-amino-acid chain; its full sequence is Leucyl/phenylalanyl-tRNA--protein transferase (256 aa).

A disordered region spans residues 1-21; it reads MIPWLPDDSDSAPFPPTRLAL.

It belongs to the L/F-transferase family.

It localises to the cytoplasm. It catalyses the reaction N-terminal L-lysyl-[protein] + L-leucyl-tRNA(Leu) = N-terminal L-leucyl-L-lysyl-[protein] + tRNA(Leu) + H(+). The catalysed reaction is N-terminal L-arginyl-[protein] + L-leucyl-tRNA(Leu) = N-terminal L-leucyl-L-arginyl-[protein] + tRNA(Leu) + H(+). The enzyme catalyses L-phenylalanyl-tRNA(Phe) + an N-terminal L-alpha-aminoacyl-[protein] = an N-terminal L-phenylalanyl-L-alpha-aminoacyl-[protein] + tRNA(Phe). Functionally, functions in the N-end rule pathway of protein degradation where it conjugates Leu, Phe and, less efficiently, Met from aminoacyl-tRNAs to the N-termini of proteins containing an N-terminal arginine or lysine. In Leptothrix cholodnii (strain ATCC 51168 / LMG 8142 / SP-6) (Leptothrix discophora (strain SP-6)), this protein is Leucyl/phenylalanyl-tRNA--protein transferase.